The sequence spans 181 residues: Photosystem I assembly protein Ycf4 (181 aa).

The next 2 membrane-spanning stretches (helical) occupy residues 19-39 and 61-81; these read YFWA…GISS and IVMM…MATL.

It belongs to the Ycf4 family.

It localises to the plastid. The protein localises to the chloroplast thylakoid membrane. Seems to be required for the assembly of the photosystem I complex. This Thalassiosira pseudonana (Marine diatom) protein is Photosystem I assembly protein Ycf4.